The primary structure comprises 430 residues: 3-phosphoshikimate 1-carboxyvinyltransferase (430 aa).

The 3-phosphoshikimate site is built by K23, S24, and R28. Residue K23 coordinates phosphoenolpyruvate. Phosphoenolpyruvate is bound by residues G95 and R123. Positions 169, 171, 315, and 342 each coordinate 3-phosphoshikimate. Q171 is a binding site for phosphoenolpyruvate. Catalysis depends on D315, which acts as the Proton acceptor. Phosphoenolpyruvate contacts are provided by R346 and R388.

The protein belongs to the EPSP synthase family. Monomer.

Its subcellular location is the cytoplasm. The catalysed reaction is 3-phosphoshikimate + phosphoenolpyruvate = 5-O-(1-carboxyvinyl)-3-phosphoshikimate + phosphate. It participates in metabolic intermediate biosynthesis; chorismate biosynthesis; chorismate from D-erythrose 4-phosphate and phosphoenolpyruvate: step 6/7. Its function is as follows. Catalyzes the transfer of the enolpyruvyl moiety of phosphoenolpyruvate (PEP) to the 5-hydroxyl of shikimate-3-phosphate (S3P) to produce enolpyruvyl shikimate-3-phosphate and inorganic phosphate. The protein is 3-phosphoshikimate 1-carboxyvinyltransferase of Streptococcus pyogenes serotype M3 (strain ATCC BAA-595 / MGAS315).